The primary structure comprises 360 residues: Peptide chain release factor 1 (360 aa).

Gln-235 carries the N5-methylglutamine modification. The interval 286-311 (QAQAQADTRRNLLGSGDRSDKIRTYN) is disordered.

The protein belongs to the prokaryotic/mitochondrial release factor family. Post-translationally, methylated by PrmC. Methylation increases the termination efficiency of RF1.

The protein resides in the cytoplasm. In terms of biological role, peptide chain release factor 1 directs the termination of translation in response to the peptide chain termination codons UAG and UAA. The chain is Peptide chain release factor 1 from Histophilus somni (strain 2336) (Haemophilus somnus).